Here is a 295-residue protein sequence, read N- to C-terminus: Giardin subunit alpha-1 (295 aa).

Annexin repeat units follow at residues 2-71, 73-143, 153-223, and 226-293; these read PKVT…MDLF, DRHE…MEKW, GSPE…AHFA, and GMHR…TLWR.

It belongs to the annexin family. Giardin subunit alpha subfamily.

It is found in the cytoplasm. Its subcellular location is the cytoskeleton. In terms of biological role, giardins are involved in parasite attachment to the intestinal mucosa and in the cytoskeletal disassembly and reassembly that marks the transition from infectious trophozoite to transmissible cyst. They may interact with other cytoskeletal proteins such as microtubules in the microribbons or crossbridges, to maintain the integrity of the ventral disk. This is Giardin subunit alpha-1 from Giardia intestinalis (Giardia lamblia).